The following is a 458-amino-acid chain: Phosphoglucosamine mutase (458 aa).

Serine 106 (phosphoserine intermediate) is an active-site residue. The Mg(2+) site is built by serine 106, aspartate 247, aspartate 249, and aspartate 251. Serine 106 bears the Phosphoserine mark.

Belongs to the phosphohexose mutase family. Mg(2+) is required as a cofactor. In terms of processing, activated by phosphorylation.

It catalyses the reaction alpha-D-glucosamine 1-phosphate = D-glucosamine 6-phosphate. Functionally, catalyzes the conversion of glucosamine-6-phosphate to glucosamine-1-phosphate. In Chlamydia abortus (strain DSM 27085 / S26/3) (Chlamydophila abortus), this protein is Phosphoglucosamine mutase.